The following is a 326-amino-acid chain: Homocysteine S-methyltransferase 1 (326 aa).

The 315-residue stretch at L9 to L323 folds into the Hcy-binding domain. Zn(2+) is bound by residues C241, C308, and C309.

Zn(2+) is required as a cofactor. In terms of tissue distribution, expressed in roots, young leaves, florets and flowers. Not detected in old leaves.

It carries out the reaction S-methyl-L-methionine + L-homocysteine = 2 L-methionine + H(+). Its activity is regulated as follows. Inhibited by L-methionine. Its function is as follows. Catalyzes methyl transfer from S-methylmethionine to homocysteine. The highest preference is for DL-homocysteine &gt;&gt; DL-cysteine. Has no selenocysteine methyltransferase activity. The polypeptide is Homocysteine S-methyltransferase 1 (HMT1) (Brassica oleracea var. italica (Broccoli)).